A 537-amino-acid chain; its full sequence is Eukaryotic translation initiation factor 3 subunit L (537 aa).

Residues 1–19 are compositionally biased toward basic and acidic residues; sequence MSRRVEFDMSHEDHTDRRR. Residues 1 to 28 form a disordered region; the sequence is MSRRVEFDMSHEDHTDRRRTNTFSSEED. Residues 297-485 form the PCI domain; sequence EATKMFVNCL…GPSTVDDDEP (189 aa).

The protein belongs to the eIF-3 subunit L family. As to quaternary structure, component of the eukaryotic translation initiation factor 3 (eIF-3) complex.

The protein resides in the cytoplasm. Its function is as follows. Component of the eukaryotic translation initiation factor 3 (eIF-3) complex, which is involved in protein synthesis of a specialized repertoire of mRNAs and, together with other initiation factors, stimulates binding of mRNA and methionyl-tRNAi to the 40S ribosome. The eIF-3 complex specifically targets and initiates translation of a subset of mRNAs involved in cell proliferation. The chain is Eukaryotic translation initiation factor 3 subunit L from Caenorhabditis briggsae.